A 465-amino-acid polypeptide reads, in one-letter code: GTPase Der (465 aa).

2 consecutive EngA-type G domains span residues 3–167 (PLVA…PEEG) and 179–352 (VRIA…ASAT). GTP contacts are provided by residues 9-16 (GRPNVGKS), 57-61 (DTGGI), 119-122 (NKID), 185-192 (GRPNVGKS), 232-236 (DTAGL), and 297-300 (NKWD). The 85-residue stretch at 353–437 (HEFSTSEVNQ…PVCFIFREGA (85 aa)) folds into the KH-like domain.

It belongs to the TRAFAC class TrmE-Era-EngA-EngB-Septin-like GTPase superfamily. EngA (Der) GTPase family. Associates with the 50S ribosomal subunit.

Its function is as follows. GTPase that plays an essential role in the late steps of ribosome biogenesis. In Xanthomonas oryzae pv. oryzae (strain MAFF 311018), this protein is GTPase Der.